Here is a 400-residue protein sequence, read N- to C-terminus: Golgin-45 (400 aa).

Positions 1–16 are enriched in polar residues; that stretch reads MTTKNLETKVTVTSSP. The interval 1-58 is disordered; sequence MTTKNLETKVTVTSSPIRGAGDGMETEEPPKSVEVTSGVQSRKHHSLQSPWKKAVPSE. Ser-15 is subject to Phosphoserine. The Tankyrase-binding motif signature appears at 18–22; that stretch reads RGAGD. Ser-49 carries the post-translational modification Phosphoserine. Residues 120–213 are a coiled coil; the sequence is NKELSEVKNV…QLERMSIQCD (94 aa). At Thr-348 the chain carries Phosphothreonine. At Ser-353 the chain carries Phosphoserine. The segment at 394–400 is essential for interaction with GORASP2; that stretch reads RGELIAL.

In terms of assembly, interacts with GORASP2. Interacts with the GTP-bound form of RAB2, but not with other Golgi Rab proteins. Identified in a complex with RAB2 and GORASP2. ADP-ribosylated by tankyrase TNKS and TNKS2. Poly-ADP-ribosylated protein is recognized by RNF146, followed by ubiquitination. Post-translationally, ubiquitinated by RNF146 when poly-ADP-ribosylated, leading to its degradation. As to expression, detected in adrenal gland.

Its subcellular location is the golgi apparatus membrane. It is found in the nucleus. The protein localises to the cytoplasm. Required for normal Golgi structure and for protein transport from the endoplasmic reticulum (ER) through the Golgi apparatus to the cell surface. The sequence is that of Golgin-45 (BLZF1) from Homo sapiens (Human).